Consider the following 585-residue polypeptide: Butyrophilin subfamily 3 member A3 (585 aa).

The signal sequence occupies residues 1 to 29 (MKMASSLACLLLNFHVSVFLVQLLTPCSA). Ig-like V-type domains follow at residues 30–139 (QFSV…KALV) and 145–236 (ALGS…ASIS). Residues 30–248 (QFSVLGPSGP…DPFFTSAQPW (219 aa)) lie on the Extracellular side of the membrane. Disulfide bonds link cysteine 52/cysteine 126 and cysteine 166/cysteine 220. An N-linked (GlcNAc...) asparagine glycan is attached at asparagine 115. The helical transmembrane segment at 249-269 (IAALAGTLPISLLLLAGASYF) threads the bilayer. Topologically, residues 270–585 (LWRQQKEKIA…KPQACTEALY (316 aa)) are cytoplasmic. The B30.2/SPRY domain occupies 322–518 (RGEKSLAYHE…LTICPTPKEV (197 aa)). Positions 560–585 (AGAEGVSPSTTTSQNHKPQACTEALY) are disordered. The segment covering 566-576 (SPSTTTSQNHK) has biased composition (polar residues).

This sequence belongs to the immunoglobulin superfamily. BTN/MOG family.

It localises to the membrane. The polypeptide is Butyrophilin subfamily 3 member A3 (BTN3A3) (Pongo abelii (Sumatran orangutan)).